The primary structure comprises 349 residues: Phosphate acyltransferase (349 aa).

This sequence belongs to the PlsX family. As to quaternary structure, homodimer. Probably interacts with PlsY.

The protein localises to the cytoplasm. The catalysed reaction is a fatty acyl-[ACP] + phosphate = an acyl phosphate + holo-[ACP]. It functions in the pathway lipid metabolism; phospholipid metabolism. Functionally, catalyzes the reversible formation of acyl-phosphate (acyl-PO(4)) from acyl-[acyl-carrier-protein] (acyl-ACP). This enzyme utilizes acyl-ACP as fatty acyl donor, but not acyl-CoA. This Rhodospirillum rubrum (strain ATCC 11170 / ATH 1.1.1 / DSM 467 / LMG 4362 / NCIMB 8255 / S1) protein is Phosphate acyltransferase.